The following is a 153-amino-acid chain: Small heat shock protein HspB (153 aa).

The sHSP domain maps to 30-140; sequence AGTEDNYPPC…KPRRISISGS (111 aa).

The protein belongs to the small heat shock protein (HSP20) family.

This Bradyrhizobium diazoefficiens (strain JCM 10833 / BCRC 13528 / IAM 13628 / NBRC 14792 / USDA 110) protein is Small heat shock protein HspB (hspB).